The chain runs to 58 residues: uncharacterized protein (58 aa).

This sequence to A.fulgidus AF2407.1.

This is an uncharacterized protein from Pyrococcus abyssi (strain GE5 / Orsay).